Consider the following 281-residue polypeptide: MSHGTYYECEPRGGQQPLEFSGGRAGPGELGDMCEHEASIDLSAYIESGEEQLLSDLFAMKPTPEARSLKGPGTPSFPHYLPADPRPFAYPSHTFGPDRKALGPGIYSNPGSYDPRAVAVKEEPRGPEGNRGTGRGSYNPLQYQVAHCGQTAVHLPPTLAAPGQPLRVLKAPVAAAAPPCSPLLKAPSPAGPSHKGKKAVNKDSLEYRLRRERNNIAVRKSRDKAKRRIMETQQKVLEYMAENERLRSRVDQLTQELDTLRNLFRQIPEAASLIKGVGGCS.

The interval 1-30 is disordered; it reads MSHGTYYECEPRGGQQPLEFSGGRAGPGEL. A Glycyl lysine isopeptide (Lys-Gly) (interchain with G-Cter in SUMO2) cross-link involves residue K121. The residue at position 181 (S181) is a Phosphoserine. A bZIP domain is found at 204–267; sequence SLEYRLRRER…DTLRNLFRQI (64 aa). The segment at 208–245 is basic motif; sequence RLRRERNNIAVRKSRDKAKRRIMETQQKVLEYMAENER. A leucine-zipper region spans residues 246-267; that stretch reads LRSRVDQLTQELDTLRNLFRQI.

This sequence belongs to the bZIP family. C/EBP subfamily. As to quaternary structure, binds DNA as a homodimer and as a heterodimer. Can form stable heterodimers with CEBPA, CEBPB and CEBPD. Interacts with GATA1 and SPI1. Interacts with SMARCD2.

Its subcellular location is the nucleus. Functionally, transcriptional activator. C/EBP are DNA-binding proteins that recognize two different motifs: the CCAAT homology common to many promoters and the enhanced core homology common to many enhancers. Required for the promyelocyte-myelocyte transition in myeloid differentiation. This is CCAAT/enhancer-binding protein epsilon (Cebpe) from Rattus norvegicus (Rat).